The primary structure comprises 163 residues: Putative 4-hydroxy-4-methyl-2-oxoglutarate aldolase (163 aa).

Residues Gly76–Leu79 and Arg98 each bind substrate. Asp99 serves as a coordination point for a divalent metal cation.

This sequence belongs to the class II aldolase/RraA-like family. As to quaternary structure, homotrimer. A divalent metal cation is required as a cofactor.

The enzyme catalyses 4-hydroxy-4-methyl-2-oxoglutarate = 2 pyruvate. It catalyses the reaction oxaloacetate + H(+) = pyruvate + CO2. Functionally, catalyzes the aldol cleavage of 4-hydroxy-4-methyl-2-oxoglutarate (HMG) into 2 molecules of pyruvate. Also contains a secondary oxaloacetate (OAA) decarboxylase activity due to the common pyruvate enolate transition state formed following C-C bond cleavage in the retro-aldol and decarboxylation reactions. The polypeptide is Putative 4-hydroxy-4-methyl-2-oxoglutarate aldolase (Pseudomonas fluorescens (strain ATCC BAA-477 / NRRL B-23932 / Pf-5)).